A 132-amino-acid chain; its full sequence is Small ribosomal subunit protein uS8 (132 aa).

This sequence belongs to the universal ribosomal protein uS8 family. As to quaternary structure, part of the 30S ribosomal subunit. Contacts proteins S5 and S12.

Its function is as follows. One of the primary rRNA binding proteins, it binds directly to 16S rRNA central domain where it helps coordinate assembly of the platform of the 30S subunit. The protein is Small ribosomal subunit protein uS8 of Granulibacter bethesdensis (strain ATCC BAA-1260 / CGDNIH1).